Reading from the N-terminus, the 215-residue chain is MHKDGVLIKGNREGINATIDMEKFSSFEDMLNMLIKKLSKGKHFYKGTTLILNINLSLIKKNDIKKLKESLLNEIELNEIIFEQLELEEESNKQTKIFNGVYEGKTKFIRRTVRSGQCLNYPGNIVIIGDVNSGAEVHAGGNIIVLGSLKGSVNAGNTGNKKSIIAAFLLEPEILKIADVITISPDGLEKPKYPEIAKVKDGTIIVEPYLANKYI.

Belongs to the MinC family. Interacts with MinD and FtsZ.

Its function is as follows. Cell division inhibitor that blocks the formation of polar Z ring septums. Rapidly oscillates between the poles of the cell to destabilize FtsZ filaments that have formed before they mature into polar Z rings. Prevents FtsZ polymerization. The chain is Probable septum site-determining protein MinC from Clostridium botulinum (strain Alaska E43 / Type E3).